The following is a 66-amino-acid chain: Vesicular acetylcholine transporter (66 aa).

The chain crosses the membrane as a helical span at residues 1 to 15; it reads GMGLANLLYAPVLLL. The Cytoplasmic portion of the chain corresponds to 16–66; sequence LRNVGLLTRSRSERDVLLDEPPQGLYDAVRLRERPVSGQDGEPRSPPGPFD. Residues 43-66 are disordered; the sequence is AVRLRERPVSGQDGEPRSPPGPFD.

The protein belongs to the major facilitator superfamily. Vesicular transporter family. In terms of assembly, interacts with SEC14L1.

Its subcellular location is the cytoplasmic vesicle. The protein resides in the secretory vesicle. It localises to the synaptic vesicle membrane. The catalysed reaction is acetylcholine(out) + 2 H(+)(in) = acetylcholine(in) + 2 H(+)(out). It catalyses the reaction choline(in) + 2 H(+)(out) = choline(out) + 2 H(+)(in). The enzyme catalyses serotonin(in) + 2 H(+)(out) = serotonin(out) + 2 H(+)(in). Electrogenic antiporter that exchanges one cholinergic neurotransmitter, acetylcholine or choline, with two intravesicular protons across the membrane of synaptic vesicles. Uses the electrochemical proton gradient established by the V-type proton-pump ATPase to store neurotransmitters inside the vesicles prior to their release via exocytosis. Determines cholinergic vesicular quantal size at presynaptic nerve terminals in developing neuro-muscular junctions with an impact on motor neuron differentiation and innervation pattern. Part of forebrain cholinergic system, regulates hippocampal synapse transmissions that underlie spatial memory formation. Can transport serotonin. The protein is Vesicular acetylcholine transporter (SLC18A3) of Macaca fuscata fuscata (Japanese macaque).